We begin with the raw amino-acid sequence, 273 residues long: tRNA (guanine-N(7)-)-methyltransferase (273 aa).

A compositionally biased stretch (polar residues) spans 1 to 31 (MSQHPDINTNVDATSLTDDQKSLDTNATSGN). Residues 1–36 (MSQHPDINTNVDATSLTDDQKSLDTNATSGNEVAPD) form a disordered region. Positions 105, 130, 157, and 179 each coordinate S-adenosyl-L-methionine. Aspartate 179 is a catalytic residue. Substrate is bound by residues lysine 183, aspartate 215, and 252–255 (TKFE).

This sequence belongs to the class I-like SAM-binding methyltransferase superfamily. TrmB family.

The enzyme catalyses guanosine(46) in tRNA + S-adenosyl-L-methionine = N(7)-methylguanosine(46) in tRNA + S-adenosyl-L-homocysteine. Its pathway is tRNA modification; N(7)-methylguanine-tRNA biosynthesis. Its function is as follows. Catalyzes the formation of N(7)-methylguanine at position 46 (m7G46) in tRNA. In Psychrobacter cryohalolentis (strain ATCC BAA-1226 / DSM 17306 / VKM B-2378 / K5), this protein is tRNA (guanine-N(7)-)-methyltransferase.